Here is a 362-residue protein sequence, read N- to C-terminus: E3 ubiquitin-protein ligase rififylin (362 aa).

Residues 17–37 (ETPPPQGARTQAYSNPGYSSF) form a disordered region. Over residues 24 to 37 (ARTQAYSNPGYSSF) the composition is skewed to polar residues. The segment at 41–93 (TGSEPSCKACGVHFASTTRKQTCLDCKKNFCMTCSSQEGNGPRLCLLCLRFRA) adopts an FYVE-type zinc-finger fold. The region spanning 101 to 120 (LMKMKVKDLRDYLSLHDIST) is the SAP 1 domain. Positions 162–183 (LTQPQSSTVPPTSPGLPSSPAQ) are disordered. 4 positions are modified to phosphoserine: Ser225, Ser228, Ser231, and Ser239. An SAP 2 domain is found at 249-263 (IEGLTVRQLKEILAR). The segment at 315–350 (CKICMDSPIDCVLLECGHMVTCTKCGKRMNECPICR) adopts an RING-type zinc-finger fold.

As to quaternary structure, interacts with CASP8 and CASP10. Interacts with RIPK1 (via protein kinase domain); involved in RIPK1 ubiquitination. Interacts with PRR5L. Interacts (via RING-type zinc finger) with p53/TP53; involved in p53/TP53 ubiquitination. Interacts (via RING-type zinc finger) with MDM2; the interaction stabilizes MDM2. Post-translationally, autoubiquitinated. In terms of processing, palmitoylated. Undergoes caspase-mediated cleavage upon death-receptor activation, by TNFSF10 for instance. May be mediated by the caspases CASP8 and CASP10 in a negative feedback loop. Ubiquitous. Detected in cerebrum, cerebellum, midbrain, brain stem, hippocampus, striatum, liver, heart, lung, kidney, muscle, spleen and testis.

Its subcellular location is the cytoplasm. It is found in the cytosol. It localises to the cell membrane. The protein resides in the recycling endosome membrane. It catalyses the reaction S-ubiquitinyl-[E2 ubiquitin-conjugating enzyme]-L-cysteine + [acceptor protein]-L-lysine = [E2 ubiquitin-conjugating enzyme]-L-cysteine + N(6)-ubiquitinyl-[acceptor protein]-L-lysine.. It functions in the pathway protein modification; protein ubiquitination. In terms of biological role, E3 ubiquitin-protein ligase that regulates several biological processes through the ubiquitin-mediated proteasomal degradation of various target proteins. Mediates 'Lys-48'-linked polyubiquitination of PRR5L and its subsequent proteasomal degradation thereby indirectly regulating cell migration through the mTORC2 complex. Also ubiquitinates the caspases CASP8 and CASP10, promoting their proteasomal degradation, to negatively regulate apoptosis downstream of death domain receptors. Also negatively regulates the tumor necrosis factor-mediated signaling pathway through targeting of RIPK1 to ubiquitin-mediated proteasomal degradation. Negatively regulates p53/TP53 through its direct ubiquitination and targeting to proteasomal degradation. Indirectly, may also negatively regulate p53/TP53 through ubiquitination and degradation of SFN. May also play a role in endocytic recycling. This Rattus norvegicus (Rat) protein is E3 ubiquitin-protein ligase rififylin.